The following is a 376-amino-acid chain: MKGLEEYVREILEDIRRRGLEALREYSERFDNYSGPFRVSEGEFEEAEELVPEEDKRVIEETMERLWEYHARQFRDVELYIKRGSLYGLIYRPIGRIGIYVPGGKPLPSTLMMVGIPARIAGVREIAVTTPPKDGKVNPYVLYVAKLLGIEEVYKLGGVGAIAAMAYGVGMRRVDKIFGPGNRFVNEAKRQVFGIVGIDSLAGPSEIAVIADESADKDYVLADLLSQLEHGKDSKAWLLTTSRELADYCSREGIEVLLCRNLEECAEKANEIAPEHLEIITENPEELVDLIENAGAIYLGPYTPVPAADYFLGVNHVLPTGGAARFSGVLTVMDFMKPITLARVSREEFLAYRRLGMRLAEIEGMEAHRRSLEVRR.

NAD(+)-binding residues include Tyr-100 and Asn-182. Positions 205, 227, and 230 each coordinate substrate. Residues Gln-227 and His-230 each coordinate Zn(2+). Catalysis depends on proton acceptor residues Glu-275 and His-276. Substrate-binding residues include His-276, Asp-309, Glu-363, and His-368. Asp-309 serves as a coordination point for Zn(2+). Residue His-368 coordinates Zn(2+).

This sequence belongs to the histidinol dehydrogenase family. It depends on Zn(2+) as a cofactor.

It carries out the reaction L-histidinol + 2 NAD(+) + H2O = L-histidine + 2 NADH + 3 H(+). Its pathway is amino-acid biosynthesis; L-histidine biosynthesis; L-histidine from 5-phospho-alpha-D-ribose 1-diphosphate: step 9/9. Its function is as follows. Catalyzes the sequential NAD-dependent oxidations of L-histidinol to L-histidinaldehyde and then to L-histidine. The protein is Histidinol dehydrogenase of Thermococcus kodakarensis (strain ATCC BAA-918 / JCM 12380 / KOD1) (Pyrococcus kodakaraensis (strain KOD1)).